Reading from the N-terminus, the 348-residue chain is MPLFKRRDGSGPAPNATIREKYDFRDVLGTGAFSKVFLAESKSDAGQMYAVKCIDKKALKGKEESLENEIKVLRKLRHNNIVQLFDTYDEKQFVYLVMELVTGGELFDRIVAKGSYTEQDASNLIRQVLEAVGFMHDNGVVHRDLKPENLLYYNQDEDSKIMISDFGLSKTEDSGVMATACGTPGYVAPEVLQQKPYGKAVDVWSIGVIAYILLCGYPPFYDESDANLFAQIIKGEYEFDAPYWDQISDSAKDFITHLMCCDPEARFTCQDALSHPWISGNTAYTHDIHGTVAVHLKKSLAKRNWKKAYNAAAAIRQLQMLRLSSNSNRLQKQASQQQPEPPTPAFHA.

A Nuclear localization signal 1 motif is present at residues 7 to 22; sequence RDGSGPAPNATIREKY. The region spanning 22 to 278 is the Protein kinase domain; it reads YDFRDVLGTG…CQDALSHPWI (257 aa). Residues 28–36 and Lys52 each bind ATP; that span reads LGTGAFSKV. The Nuclear localization signal 2 motif lies at 71–78; the sequence is KVLRKLRH. Asp144 serves as the catalytic Proton acceptor. Position 179 is a phosphothreonine; by ckk-1 (Thr179). An autoinhibitory domain region spans residues 278 to 318; sequence ISGNTAYTHDIHGTVAVHLKKSLAKRNWKKAYNAAAAIRQL. Residues 288-294 carry the Nuclear export sequence motif; that stretch reads IHGTVAV. The Nuclear localization signal 3 signature appears at 297–307; the sequence is KKSLAKRNWKK. Residues 298-319 form a calmodulin-binding region; the sequence is KSLAKRNWKKAYNAAAAIRQLQ. Residues 327–338 are compositionally biased toward polar residues; sequence SNRLQKQASQQQ. The tract at residues 327–348 is disordered; it reads SNRLQKQASQQQPEPPTPAFHA. Positions 339 to 348 are enriched in pro residues; that stretch reads PEPPTPAFHA.

This sequence belongs to the protein kinase superfamily. CAMK Ser/Thr protein kinase family. CaMK subfamily. Interacts with importin ima-3; affinity for ima-3 is increased in the presence of Ca(2+) and calmodulin and leads to increased nuclear accumulation of cmk-1 in FLP neurons upon prolonged heat activation. It depends on Mg(2+) as a cofactor. Post-translationally, phosphorylation at Thr-179 can promote both nuclear export and import, sustaining nucleocytoplasmic shuttling. Expressed in head and tail neurons and vulval muscles. Throughout the nervous system. Detected in neurites and neuronal cell bodies. Expressed in the mechanosensory neurons, AVM and ALM, and in the interneurons, AVA, AVB and AVD. Expressed in the right and left ASE neurons where it functions cell-autonomously to control salt-avoidance learning. Expressed in FLP and AFD thermosensory neurons.

Its subcellular location is the nucleus. The protein resides in the cytoplasm. It catalyses the reaction L-seryl-[protein] + ATP = O-phospho-L-seryl-[protein] + ADP + H(+). It carries out the reaction L-threonyl-[protein] + ATP = O-phospho-L-threonyl-[protein] + ADP + H(+). With respect to regulation, activated by Ca(2+)/calmodulin. Binding of calmodulin results in a conformational change that generates functional binding sites for both substrate and ATP, and thus relieves autoinhibition and lowers the Km of substrate binding. Must be phosphorylated by ckk-1 to be maximally active but this does not appear to be required for activity in AFD neurons. Calcium/calmodulin-dependent protein kinase that operates in the calcium-triggered CaMKK-CaMK1 signaling cascade which results in transcriptional activation. Transcriptional activation occurs at least in part through phosphorylation of crh-1. Regulates gene expression, sensory morphology, and function of the AFD thermosensory neurons. Involved in long-term adaptation of AFD neurons to temperatures warmer than the initial acclimatized cultivation temperature. Acts in the FLP thermal nociceptors to moderate the responsiveness to noxious heat and controls neuropeptide release from FLP neurons in response to temperature elevations. Regulates the dauer decision, the decision of the larvae to enter into the alternative stress-resistant and long-lived dauer developmental stage, based on the feeding state, primarily in the AWC sensory neurons. Acts non cell-autonomously in the AWC neurons to regulate expression of the daf-28 insulin-like peptide and cell-autonomously in the ASI sensory neurons to regulate expression of the growth promoting daf-7 in a food-regulated manner. Plays a role in memory-based thermal response of an individual AFD neuron cell. Influences habituation and sensitivity to repeated mechanosensory stimuli. Involved in chemotaxis response in AWC neurons to attractant 2-heptanone, a volatile organic compound emitted by the nematode pathogenic bacterium B.nematocida B16. Acts in the ASE salt-sensing neurons to promote a type of aversive gustatory-associated learning called salt-avoidance learning via regulation of crh-1 signaling and the promotion of long-term memory formation, but is not involved in salt attraction. Represses transcription of glutamate receptor glr-1 in the nucleus basally and in response to changes in synaptic activity. This is Calcium/calmodulin-dependent protein kinase type 1 from Caenorhabditis elegans.